A 293-amino-acid chain; its full sequence is Putative F-box/kelch-repeat protein At4g34170 (293 aa).

The F-box domain maps to 9-55; it reads VKTMLMLHDDLILNCLARVSRSNHPTLSLVCKRFHSLLASVELYQTR. 3 Kelch repeats span residues 94–140, 141–187, and 226–272; these read NIDA…TLDG, KIYV…ESVR, and SYCV…LADY.

The sequence is that of Putative F-box/kelch-repeat protein At4g34170 from Arabidopsis thaliana (Mouse-ear cress).